The sequence spans 171 residues: Inosine/xanthosine triphosphatase (171 aa).

8–13 contributes to the substrate binding site; sequence TTNPAK. Glu-38 and Gln-68 together coordinate Mg(2+).

This sequence belongs to the YjjX NTPase family. Homodimer. Mg(2+) is required as a cofactor. It depends on Mn(2+) as a cofactor.

It carries out the reaction XTP + H2O = XDP + phosphate + H(+). The enzyme catalyses ITP + H2O = IDP + phosphate + H(+). Functionally, phosphatase that hydrolyzes non-canonical purine nucleotides such as XTP and ITP to their respective diphosphate derivatives. Probably excludes non-canonical purines from DNA/RNA precursor pool, thus preventing their incorporation into DNA/RNA and avoiding chromosomal lesions. This chain is Inosine/xanthosine triphosphatase, found in Citrobacter koseri (strain ATCC BAA-895 / CDC 4225-83 / SGSC4696).